We begin with the raw amino-acid sequence, 420 residues long: Xyloglucan O-acetyltransferase 4 (420 aa).

Residues 1–30 are Cytoplasmic-facing; it reads MTMHEKMKLPSCSCSAFKCGKKDRWLNMER. Residues 31 to 51 form a helical; Signal-anchor for type II membrane protein membrane-spanning segment; the sequence is PIPFLLIGLTTILSVFILYTL. Residues 52–420 are Lumenal-facing; sequence NPLKFVIEHN…LLLAVLRRLD (369 aa). 4 disulfides stabilise this stretch: cysteine 78-cysteine 128, cysteine 99-cysteine 164, cysteine 108-cysteine 400, and cysteine 323-cysteine 396. A glycan (N-linked (GlcNAc...) asparagine) is linked at asparagine 96. The short motif at 151–153 is the GDS motif element; the sequence is GDS. Serine 153 (nucleophile) is an active-site residue. Residues asparagine 192, asparagine 212, asparagine 270, and asparagine 324 are each glycosylated (N-linked (GlcNAc...) asparagine). Aspartate 395 acts as the Proton donor in catalysis. The DXXH motif motif lies at 395-398; that stretch reads DCVH. The active-site Proton acceptor is the histidine 398.

Belongs to the PC-esterase family. TBL subfamily.

Its subcellular location is the golgi apparatus membrane. Xyloglucan acetyltransferase that catalyzes the acetylation of fucosylated Gal residues on xyloglucan side chains. Predominantly catalyze 6-O-monoacetylation of Gal residues in the Fuc-Gal-Xyl trisaccharide side chains of xyloglucan oligomers. The sequence is that of Xyloglucan O-acetyltransferase 4 from Populus trichocarpa (Western balsam poplar).